A 979-amino-acid chain; its full sequence is Disks large-associated protein 3 (979 aa).

Residues 1–10 (MRGYHGDRGS) show a composition bias toward basic and acidic residues. 6 disordered regions span residues 1–20 (MRGY…FADQ), 52–95 (AGLG…MYPG), 136–169 (FHTL…SPSR), 182–291 (AKSH…CLEG), 400–429 (AMGD…TRRS), and 537–581 (FRKA…RCSS). S58 is subject to Phosphoserine. Gly residues predominate over residues 73–86 (PEGGPAGAGVGGGS). Basic and acidic residues predominate over residues 190–202 (PGKRDYNGPKAEG). The segment covering 203-218 (RGGSGGDSYPGPGSGG) has biased composition (gly residues). The span at 221–246 (TSHHHHHHHHHHHHQSRHGKRSKSKD) shows a compositional bias: basic residues. 4 positions are modified to phosphoserine: S406, S409, S412, and S416. Positions 540–549 (APPPIPPGSQ) are enriched in pro residues. S643 and S645 each carry phosphoserine. Disordered regions lie at residues 741–790 (EGYP…RASP) and 908–940 (EEKK…DRQR). Basic and acidic residues-rich tracts occupy residues 769–779 (GRRDSWIERGS) and 927–940 (PVKE…DRQR). A phosphoserine mark is found at S932, S935, and S967.

The protein belongs to the SAPAP family. Interacts with DLG4/PSD-95.

It is found in the cell membrane. The protein resides in the postsynaptic density. Its subcellular location is the synapse. Its function is as follows. May play a role in the molecular organization of synapses and neuronal cell signaling. Could be an adapter protein linking ion channel to the subsynaptic cytoskeleton. May induce enrichment of PSD-95/SAP90 at the plasma membrane. The sequence is that of Disks large-associated protein 3 (DLGAP3) from Homo sapiens (Human).